We begin with the raw amino-acid sequence, 259 residues long: Tryptophan synthase alpha chain (259 aa).

Active-site proton acceptor residues include E52 and D63.

This sequence belongs to the TrpA family. Tetramer of two alpha and two beta chains.

It catalyses the reaction (1S,2R)-1-C-(indol-3-yl)glycerol 3-phosphate + L-serine = D-glyceraldehyde 3-phosphate + L-tryptophan + H2O. The protein operates within amino-acid biosynthesis; L-tryptophan biosynthesis; L-tryptophan from chorismate: step 5/5. The alpha subunit is responsible for the aldol cleavage of indoleglycerol phosphate to indole and glyceraldehyde 3-phosphate. In Streptococcus gordonii (strain Challis / ATCC 35105 / BCRC 15272 / CH1 / DL1 / V288), this protein is Tryptophan synthase alpha chain.